Here is a 106-residue protein sequence, read N- to C-terminus: Immunoglobulin lambda constant 6 (106 aa).

The Ig-like domain occupies 7–101 (PSVTLFPPSS…EGSTVEKTVA (95 aa)). C28 and C87 form a disulfide bridge.

Immunoglobulins are composed of two identical heavy chains and two identical light chains; disulfide-linked.

The protein resides in the secreted. It is found in the cell membrane. Its function is as follows. Constant region of immunoglobulin light chains. Immunoglobulins, also known as antibodies, are membrane-bound or secreted glycoproteins produced by B lymphocytes. In the recognition phase of humoral immunity, the membrane-bound immunoglobulins serve as receptors which, upon binding of a specific antigen, trigger the clonal expansion and differentiation of B lymphocytes into immunoglobulins-secreting plasma cells. Secreted immunoglobulins mediate the effector phase of humoral immunity, which results in the elimination of bound antigens. The antigen binding site is formed by the variable domain of one heavy chain, together with that of its associated light chain. Thus, each immunoglobulin has two antigen binding sites with remarkable affinity for a particular antigen. The variable domains are assembled by a process called V-(D)-J rearrangement and can then be subjected to somatic hypermutations which, after exposure to antigen and selection, allow affinity maturation for a particular antigen. The protein is Immunoglobulin lambda constant 6 of Homo sapiens (Human).